A 271-amino-acid polypeptide reads, in one-letter code: Solute carrier family 66 member 2 (271 aa).

Transmembrane regions (helical) follow at residues 7–27 (GWLL…AMVF), 49–69 (FSTH…LFWF), and 72–92 (HFES…LLML). The PQ-loop 1 domain occupies 14-80 (HQLVSWVAAG…RHFESPLLWQ (67 aa)). Ser110 is subject to Phosphoserine. Transmembrane regions (helical) follow at residues 143 to 163 (FADY…ITYL), 168 to 188 (ALFV…LGVP), and 232 to 252 (VCGL…YAFA). The 67-residue stretch at 149–215 (CVLAFTGVAG…MVLMWTSGDT (67 aa)) folds into the PQ-loop 2 domain.

It is found in the membrane. This Rattus norvegicus (Rat) protein is Solute carrier family 66 member 2 (Slc66a2).